A 303-amino-acid polypeptide reads, in one-letter code: N-acetyl-D-glucosamine kinase (303 aa).

ATP is bound by residues 4-11 (GFDIGGTK) and 133-140 (GVGGGLVL). Zn(2+)-binding residues include histidine 157, cysteine 177, cysteine 179, and cysteine 184.

This sequence belongs to the ROK (NagC/XylR) family. NagK subfamily.

It catalyses the reaction N-acetyl-D-glucosamine + ATP = N-acetyl-D-glucosamine 6-phosphate + ADP + H(+). It participates in cell wall biogenesis; peptidoglycan recycling. In terms of biological role, catalyzes the phosphorylation of N-acetyl-D-glucosamine (GlcNAc) derived from cell-wall degradation, yielding GlcNAc-6-P. The sequence is that of N-acetyl-D-glucosamine kinase from Salmonella newport (strain SL254).